We begin with the raw amino-acid sequence, 418 residues long: Serine hydroxymethyltransferase (418 aa).

(6S)-5,6,7,8-tetrahydrofolate contacts are provided by residues Leu121 and 125 to 127 (GHL). Lys230 bears the N6-(pyridoxal phosphate)lysine mark. 355-357 (SPF) is a (6S)-5,6,7,8-tetrahydrofolate binding site.

Belongs to the SHMT family. In terms of assembly, homodimer. It depends on pyridoxal 5'-phosphate as a cofactor.

The protein resides in the cytoplasm. It carries out the reaction (6R)-5,10-methylene-5,6,7,8-tetrahydrofolate + glycine + H2O = (6S)-5,6,7,8-tetrahydrofolate + L-serine. It participates in one-carbon metabolism; tetrahydrofolate interconversion. The protein operates within amino-acid biosynthesis; glycine biosynthesis; glycine from L-serine: step 1/1. In terms of biological role, catalyzes the reversible interconversion of serine and glycine with tetrahydrofolate (THF) serving as the one-carbon carrier. This reaction serves as the major source of one-carbon groups required for the biosynthesis of purines, thymidylate, methionine, and other important biomolecules. Also exhibits THF-independent aldolase activity toward beta-hydroxyamino acids, producing glycine and aldehydes, via a retro-aldol mechanism. This Streptococcus pyogenes serotype M6 (strain ATCC BAA-946 / MGAS10394) protein is Serine hydroxymethyltransferase.